Here is a 461-residue protein sequence, read N- to C-terminus: Probable metabolite transport protein CsbC (461 aa).

The Cytoplasmic segment spans residues 1 to 14 (MKKDTRKYMIYFFG). Residues 15–35 (ALGGLLYGYDTGVISGALLFI) form a helical membrane-spanning segment. Residues 36–38 (NND) lie on the Extracellular side of the membrane. The chain crosses the membrane as a helical span at residues 39–59 (IPLTTLTEGLVVSMLLLGAIF). The Cytoplasmic segment spans residues 60-76 (GSALSGTCSDRWGRRKV). A helical transmembrane segment spans residues 77 to 97 (VFVLSIIFIIGALACAFSQTI). At 98 to 104 (GMLIASR) the chain is on the extracellular side. A helical transmembrane segment spans residues 105–125 (VILGLAVGGSTALVPVYLSEM). Topologically, residues 126–139 (APTKIRGTLGTMNN) are cytoplasmic. Residues 140-160 (LMIVTGILLAYIVNYLFTPFE) form a helical membrane-spanning segment. Residues 161-163 (AWR) lie on the Extracellular side of the membrane. The helical transmembrane segment at 164–184 (WMVGLAAVPAVLLLIGIAFMP) threads the bilayer. Over 185–241 (ESPRWLVKRGSEEEARRIMNITHDPKDIEMELAEMKQGEAEKKETTLGVLKAKWIRP) the chain is Cytoplasmic. The helical transmembrane segment at 242–262 (MLLIGVGLAIFQQAVGINTVI) threads the bilayer. Residues 263 to 280 (YYAPTIFTKAGLGTSASA) lie on the Extracellular side of the membrane. A helical membrane pass occupies residues 281–301 (LGTMGIGILNVIMCITAMILI). The Cytoplasmic portion of the chain corresponds to 302-308 (DRVGRKK). A helical transmembrane segment spans residues 309–329 (LLIWGSVGITLSLAALSGVLL). The Extracellular portion of the chain corresponds to 330 to 341 (TLGLSASTAWMT). A helical transmembrane segment spans residues 342–362 (VVFLGVYIVFYQATWGPVVWV). Residues 363–378 (LMPELFPSKARGAATG) are Cytoplasmic-facing. The helical transmembrane segment at 379–399 (FTTLVLSAANLIVSLVFPLML) threads the bilayer. Over 400–402 (SAM) the chain is Extracellular. The chain crosses the membrane as a helical span at residues 403 to 423 (GIAWVFMVFSVICLLSFFFAF). Topologically, residues 424–461 (YMVPETKGKSLEEIEASLKKRFKKKKSTQNQVLNERTL) are cytoplasmic.

This sequence belongs to the major facilitator superfamily. Sugar transporter (TC 2.A.1.1) family.

The protein resides in the cell membrane. In terms of biological role, could serve either a nutritional or an osmotic protection function. The protein is Probable metabolite transport protein CsbC (csbC) of Bacillus subtilis (strain 168).